A 174-amino-acid chain; its full sequence is 3-hydroxyanthranilate 3,4-dioxygenase (174 aa).

Residue Arg-47 coordinates O2. Fe cation-binding residues include His-51, Glu-57, and His-95. Residue Glu-57 participates in substrate binding. Substrate contacts are provided by Arg-99 and Glu-110. Fe cation-binding residues include Cys-125, Cys-128, Cys-162, and Cys-165.

Belongs to the 3-HAO family. As to quaternary structure, homodimer. It depends on Fe(2+) as a cofactor.

The catalysed reaction is 3-hydroxyanthranilate + O2 = (2Z,4Z)-2-amino-3-carboxymuconate 6-semialdehyde. It participates in cofactor biosynthesis; NAD(+) biosynthesis; quinolinate from L-kynurenine: step 3/3. Its activity is regulated as follows. Inhibited by 4-chloro-3-hydroxyanthranilate. Mechanism of inactivation involves the oxidation of the catalytic active site Fe(2+) to the catalytically inactive Fe(3+) oxidation state, superoxide production, and formation of two disulfide bonds between Cys-125 and Cys-128, and Cys-162 and Cys-165. Enzyme can be reactivated under reducing conditions. Functionally, catalyzes the oxidative ring opening of 3-hydroxyanthranilate to 2-amino-3-carboxymuconate semialdehyde, which spontaneously cyclizes to quinolinate. This Cupriavidus metallidurans (strain ATCC 43123 / DSM 2839 / NBRC 102507 / CH34) (Ralstonia metallidurans) protein is 3-hydroxyanthranilate 3,4-dioxygenase.